Consider the following 212-residue polypeptide: Leucyl/phenylalanyl-tRNA--protein transferase (212 aa).

Belongs to the L/F-transferase family.

The protein localises to the cytoplasm. The enzyme catalyses N-terminal L-lysyl-[protein] + L-leucyl-tRNA(Leu) = N-terminal L-leucyl-L-lysyl-[protein] + tRNA(Leu) + H(+). The catalysed reaction is N-terminal L-arginyl-[protein] + L-leucyl-tRNA(Leu) = N-terminal L-leucyl-L-arginyl-[protein] + tRNA(Leu) + H(+). It carries out the reaction L-phenylalanyl-tRNA(Phe) + an N-terminal L-alpha-aminoacyl-[protein] = an N-terminal L-phenylalanyl-L-alpha-aminoacyl-[protein] + tRNA(Phe). Functionally, functions in the N-end rule pathway of protein degradation where it conjugates Leu, Phe and, less efficiently, Met from aminoacyl-tRNAs to the N-termini of proteins containing an N-terminal arginine or lysine. In Christiangramia forsetii (strain DSM 17595 / CGMCC 1.15422 / KT0803) (Gramella forsetii), this protein is Leucyl/phenylalanyl-tRNA--protein transferase.